The sequence spans 503 residues: Hemogen (503 aa).

2 stretches are compositionally biased toward basic residues: residues 1-10 and 61-79; these read MDMGKGRPRL and KKRK…RKRQ. The segment at 1 to 129 is disordered; it reads MDMGKGRPRL…PLVPSPTKAV (129 aa). Residues 7–87 are necessary for nuclear localization; it reads RPRLKLPQMP…RQGNVEQKAE (81 aa). Phosphoserine occurs at positions 90, 103, 124, 153, 158, 171, 213, 223, 228, 241, and 269. Phosphothreonine is present on Thr-286. Residues 381–503 form a disordered region; it reads QKTIQESPEP…ENGIYSSALF (123 aa). The segment covering 385-396 has biased composition (low complexity); the sequence is QESPEPEQYSPE. Phosphoserine is present on residues Ser-387 and Ser-394. Basic and acidic residues predominate over residues 426–436; the sequence is CQDREEPKHSL.

In terms of tissue distribution, expressed in hematopoietic precursor cells. Highly expressed in bone marrow, the red pulp of the spleen and round spermatids. Weakly expressed in peripheral blood cells.

It is found in the nucleus. In terms of biological role, regulates the proliferation and differentiation of hematopoietic cells. Overexpression block the TPA-induced megakaryocytic differentiation in the K562 cell model. May also prevent cell apoptosis through the activation of the nuclear factor-kappa B (NF-kB). The polypeptide is Hemogen (Hemgn) (Mus musculus (Mouse)).